The following is a 1346-amino-acid chain: Zinc finger protein 541 (1346 aa).

Disordered stretches follow at residues 1 to 34 and 113 to 136; these read MDQY…DTLN and EADE…SSPQ. The segment covering 21–32 has biased composition (polar residues); the sequence is FSESQGLNCSDT. 3 consecutive C2H2-type zinc fingers follow at residues 140-162, 168-190, and 196-220; these read LDCS…YLTH, HVCK…MLTH, and FVCI…YEVH. 4 disordered regions span residues 235–271, 283–328, 437–472, and 578–744; these read ACGD…LLPH, VHQK…AAPA, SAVP…EDAL, and SQLP…GGYR. Composition is skewed to low complexity over residues 294-323 and 440-458; these read PAGA…PAGP and PSRE…SPSE. A compositionally biased stretch (polar residues) spans 671-685; the sequence is PDISSLAKQLRSSKG. The segment at 838–860 adopts a C2H2-type 4 zinc-finger fold; sequence FVCKNCSQMFYTEKGLSSHMCFH. Positions 931–971 are disordered; sequence AMGQEKDGEERDSKESSQQRKRKKRPPPSTAGEPGPAGCHQ. A compositionally biased stretch (basic and acidic residues) spans 934 to 948; sequence QEKDGEERDSKESSQ. Positions 1053 to 1145 constitute an ELM2 domain; that stretch reads PHINIGSRFQ…VALETLLLRG (93 aa). The 52-residue stretch at 1160-1211 folds into the SANT domain; the sequence is TGSDVWTPIEKRLFKKAFYAHKKDFYLIHKMIQTKTVAQCVEYYYIWKKMIK. Residues 1224-1281 form a disordered region; it reads VKREPEEVERTEEKVPCSPRERPSHHPTPKLKTKSYRRESILSSSPNAGSKRTPELLG. Residues 1234-1247 are compositionally biased toward basic and acidic residues; the sequence is TEEKVPCSPRERPS. Residues 1248 to 1258 show a composition bias toward basic residues; that stretch reads HHPTPKLKTKS. Residues 1264-1273 show a composition bias toward polar residues; it reads ILSSSPNAGS. The segment at 1289–1311 adopts a C2H2-type 5 zinc-finger fold; that stretch reads FPCRECERVFDKIKSRNAHMKRH.

In terms of assembly, interacts with DNTTIP1. Identified in a complex with KCDT19, HDAC1 and HSPA2. Component of a histone deacetylase complex containing DNTTIP1, ZNF541, HDAC1 and HDAC2. Identified in a complex with HDAC1, HDAC2, DNTTIP1 and KCTD19.

The protein resides in the nucleus. Functionally, transcription regulator which is essential for male fertility and for the completion of meiotic prophase in spermatocytes. Regulates progression of the pachytene stage of meiotic prophase by activating the expression of genes involved in meiosis during spermatogenesis. Maintains the repression of pre-pachytene transcriptional programs, including meiotic double-strand breaks (DSB) formation genes in pachytene spermatocytes and suppresses aberrant DSB formation after mid-pachytene, thus ensuring meiosis progression. The sequence is that of Zinc finger protein 541 (ZNF541) from Homo sapiens (Human).